The chain runs to 183 residues: Dual-action ribosomal maturation protein DarP (183 aa).

This sequence belongs to the DarP family.

It is found in the cytoplasm. Its function is as follows. Member of a network of 50S ribosomal subunit biogenesis factors which assembles along the 30S-50S interface, preventing incorrect 23S rRNA structures from forming. Promotes peptidyl transferase center (PTC) maturation. In Salmonella arizonae (strain ATCC BAA-731 / CDC346-86 / RSK2980), this protein is Dual-action ribosomal maturation protein DarP.